The primary structure comprises 158 residues: MVEKVPMTPGGFVKLQEELRWRQQEERPRIIEAIAEARAHGDLSENAEYHAAKEAQSHNEGRISELEDLTARAEVIDLTKMSGDKIKFGAKVKLVDEDTEEEKTYQIVGDQEADVKAGRISISSPIARALIGKEVGDSIEVNAPGGSKAYEILQVSWG.

This sequence belongs to the GreA/GreB family.

Its function is as follows. Necessary for efficient RNA polymerase transcription elongation past template-encoded arresting sites. The arresting sites in DNA have the property of trapping a certain fraction of elongating RNA polymerases that pass through, resulting in locked ternary complexes. Cleavage of the nascent transcript by cleavage factors such as GreA or GreB allows the resumption of elongation from the new 3'terminus. GreA releases sequences of 2 to 3 nucleotides. The chain is Transcription elongation factor GreA from Rhizobium leguminosarum bv. trifolii (strain WSM2304).